The primary structure comprises 227 residues: Thiocyanate methyltransferase 1 (227 aa).

Tryptophan 36, tryptophan 40, tryptophan 47, and glycine 74 together coordinate S-adenosyl-L-methionine. Serine 86 carries the phosphoserine modification. S-adenosyl-L-methionine is bound by residues aspartate 95, 123-124 (DV), and tyrosine 139.

The protein belongs to the class I-like SAM-binding methyltransferase superfamily. TPMT family. Expressed in shoots, leaves, stems, inflorescences, flowers and green siliques.

It catalyses the reaction thiocyanate + S-adenosyl-L-methionine = methyl thiocyanate + S-adenosyl-L-homocysteine. Functionally, S-adenosyl-L-methionine-dependent methyltransferase. Involved in glucosinolate metabolism and defense against phytopathogens. Highly reactive to thiocyanate (NCS(-)) derived from myrosinase-mediated hydrolysis of glucosinolates upon tissue damage. This is Thiocyanate methyltransferase 1 from Arabidopsis thaliana (Mouse-ear cress).